The chain runs to 618 residues: DNA mismatch repair protein MutL (618 aa).

The segment covering Glu-367–Arg-378 has biased composition (low complexity). The interval Glu-367–Gly-402 is disordered. The segment covering Gly-382–Thr-392 has biased composition (gly residues).

It belongs to the DNA mismatch repair MutL/HexB family.

In terms of biological role, this protein is involved in the repair of mismatches in DNA. It is required for dam-dependent methyl-directed DNA mismatch repair. May act as a 'molecular matchmaker', a protein that promotes the formation of a stable complex between two or more DNA-binding proteins in an ATP-dependent manner without itself being part of a final effector complex. The protein is DNA mismatch repair protein MutL of Salmonella choleraesuis (strain SC-B67).